Consider the following 215-residue polypeptide: AN1-type zinc finger protein C1271.05c (215 aa).

Residues 116–128 (IPSISKSNLTNPP) are compositionally biased toward polar residues. Residues 116–138 (IPSISKSNLTNPPLESEKSSDKA) form a disordered region. The segment at 144–193 (ATSRRRCCHPTCTRITLRLAGNCLHCNGRFCAAHRLMEDHDCVALFSLRK) adopts an AN1-type zinc-finger fold. Zn(2+)-binding residues include C150, C155, C166, C169, C174, H177, H183, and C185.

Its subcellular location is the cytoplasm. It localises to the nucleus. This is AN1-type zinc finger protein C1271.05c from Schizosaccharomyces pombe (strain 972 / ATCC 24843) (Fission yeast).